A 2788-amino-acid chain; its full sequence is Multiple epidermal growth factor-like domains protein 8 (2788 aa).

An N-terminal signal peptide occupies residues 1–27 (MALGGALAAALALAFAVLGPLSHKVLA). Residues 28-2590 (GDCKGQRQVL…FFRQDQAHID (2563 aa)) lie on the Extracellular side of the membrane. 6 cysteine pairs are disulfide-bonded: cysteine 30–cysteine 57, cysteine 142–cysteine 152, cysteine 146–cysteine 158, cysteine 174–cysteine 184, cysteine 178–cysteine 191, and cysteine 193–cysteine 202. Residues 30-140 (CKGQRQVLRE…LGFNASFRFS (111 aa)) form the CUB 1 domain. A glycan (N-linked (GlcNAc...) asparagine) is linked at asparagine 50. 2 EGF-like domains span residues 138 to 168 (RFSLCPGGCQNHGQCKSPGVCVCEPGWGGPD) and 170 to 203 (GLQECSAYCGSHGTCASTLGPCRCEPGFLGRACD). Kelch repeat units lie at residues 241-287 (LLAV…AVAW), 290-338 (FLVL…AGHA), 346-399 (WLYV…FHAP), 402-453 (TLLV…FHTA), 459-511 (YMVV…APPS), and 525-575 (VLLV…SRDP). PSI domains lie at 561 to 613 (YCSM…SDCQ), 847 to 899 (ACSS…ALCP), and 900 to 947 (LCEE…EECP). Residue asparagine 1048 is glycosylated (N-linked (GlcNAc...) asparagine). The EGF-like 3; calcium-binding domain occupies 1074–1115 (DVDECRLGLARCHPRATCLNTPLSYECHCQRGYQGDGITHCN). Disulfide bonds link cysteine 1078/cysteine 1091, cysteine 1085/cysteine 1100, cysteine 1102/cysteine 1114, cysteine 1163/cysteine 1171, cysteine 1165/cysteine 1179, cysteine 1182/cysteine 1191, cysteine 1194/cysteine 1208, cysteine 1211/cysteine 1224, cysteine 1213/cysteine 1231, cysteine 1233/cysteine 1242, cysteine 1245/cysteine 1259, cysteine 1263/cysteine 1302, cysteine 1336/cysteine 1367, cysteine 1407/cysteine 1421, cysteine 1415/cysteine 1433, and cysteine 1435/cysteine 1444. Laminin EGF-like domains follow at residues 1163–1210 (CGCN…GCRP) and 1211–1261 (CQCN…SCFR). One can recognise a CUB 2 domain in the interval 1263 to 1405 (CGGRALLTNV…WGFNASVGSA (143 aa)). An N-linked (GlcNAc...) asparagine glycan is attached at asparagine 1271. Residue threonine 1353 is modified to Phosphothreonine. An EGF-like 4 domain is found at 1403–1445 (GSARCGSGGPGSCPVPQECVPQDGAAGAGLCRCPQGWAGPHCR). 6 Kelch repeats span residues 1522-1570 (TLWM…SFHA), 1580-1626 (AMYL…HTLT), 1632-1678 (SLLL…SAVY), 1684-1734 (SLYV…HASA), 1739-1786 (TMVV…ESVA), and 1795-1840 (RLYI…WCHG). PSI domains are found at residues 1819–1859 (PCRL…PPCS), 1867–1922 (ECRR…NDCR), 2003–2061 (PCHL…ESCS), and 2063–2120 (GCAQ…LSCP). N-linked (GlcNAc...) asparagine glycosylation is present at asparagine 2009. An EGF-like 5 domain is found at 2121 to 2159 (PEDECANGHHDCNETQNCHDQPHGYECSCKTGYTMDNVT). Cystine bridges form between cysteine 2125–cysteine 2138 and cysteine 2132–cysteine 2147. Residues asparagine 2157 and asparagine 2172 are each glycosylated (N-linked (GlcNAc...) asparagine). 4 cysteine pairs are disulfide-bonded: cysteine 2196–cysteine 2204, cysteine 2198–cysteine 2213, cysteine 2216–cysteine 2225, and cysteine 2228–cysteine 2242. Laminin EGF-like domains lie at 2196-2244 (CRCN…TCRP) and 2323-2386 (CQCN…QCYR). A disordered region spans residues 2465–2507 (HTVHIQPPPPPPPPPPPADGVPRVASDLGGLGTGSGSGSPVEP). Residues 2470–2483 (QPPPPPPPPPPPAD) are compositionally biased toward pro residues. The chain crosses the membrane as a helical span at residues 2591–2611 (LFVFFSVFFSCFFLFLSLCVL). Topologically, residues 2612-2788 (LWKAKQALDQ…SQDNLTSMSL (177 aa)) are cytoplasmic. Positions 2761–2775 (GGAGGSGHGGGGGRK) are enriched in gly residues. Residues 2761 to 2788 (GGAGGSGHGGGGGRKGLLSQDNLTSMSL) form a disordered region. Polar residues predominate over residues 2779-2788 (SQDNLTSMSL).

As to expression, expressed in brain.

Its subcellular location is the membrane. Its function is as follows. Acts as a negative regulator of hedgehog signaling. The chain is Multiple epidermal growth factor-like domains protein 8 (Megf8) from Rattus norvegicus (Rat).